The following is a 460-amino-acid chain: GTPase Der (460 aa).

EngA-type G domains are found at residues 3–167 (FTIA…PEPT) and 189–364 (IRVA…AIWN). GTP-binding positions include 9–16 (GRPNVGKS), 56–60 (DTAGL), 119–122 (NKSE), 195–202 (GRPNAGKS), 242–246 (DTAGL), and 307–310 (NKWD). The 85-residue stretch at 365-449 (RRVPTAALNR…PIRITLREKA (85 aa)) folds into the KH-like domain.

Belongs to the TRAFAC class TrmE-Era-EngA-EngB-Septin-like GTPase superfamily. EngA (Der) GTPase family. In terms of assembly, associates with the 50S ribosomal subunit.

In terms of biological role, GTPase that plays an essential role in the late steps of ribosome biogenesis. In Nitrobacter hamburgensis (strain DSM 10229 / NCIMB 13809 / X14), this protein is GTPase Der.